A 206-amino-acid polypeptide reads, in one-letter code: Small ribosomal subunit protein uS4B (206 aa).

In terms of domain architecture, S4 RNA-binding spans 96–156 (GRLDNVVYRM…EKAKKQSRIG (61 aa)).

It belongs to the universal ribosomal protein uS4 family. In terms of assembly, part of the 30S ribosomal subunit. Contacts protein S5. The interaction surface between S4 and S5 is involved in control of translational fidelity.

One of the primary rRNA binding proteins, it binds directly to 16S rRNA where it nucleates assembly of the body of the 30S subunit. In terms of biological role, with S5 and S12 plays an important role in translational accuracy. The protein is Small ribosomal subunit protein uS4B of Psychromonas ingrahamii (strain DSM 17664 / CCUG 51855 / 37).